A 255-amino-acid chain; its full sequence is PABIR family member 2 (255 aa).

The interval 1-24 (MAQEKMDLDFEADTSEGATLRRSN) is disordered. The residue at position 2 (Ala2) is an N-acetylalanine. Residues Ser25, Ser33, Ser50, and Ser58 each carry the phosphoserine modification. Thr112 bears the Phosphothreonine mark. A phosphoserine mark is found at Ser115 and Ser119. Omega-N-methylarginine is present on Arg122. Ser145 is modified (phosphoserine). 2 disordered regions span residues 169–196 (LGPL…SMLS) and 219–238 (SGLS…SPVA). The span at 174–184 (RKGEMEMESQP) shows a compositional bias: basic and acidic residues.

It belongs to the FAM122 family.

The protein is PABIR family member 2 of Mus musculus (Mouse).